The primary structure comprises 39 residues: Photosystem II reaction center protein J (39 aa).

A helical membrane pass occupies residues isoleucine 7–phenylalanine 27.

It belongs to the PsbJ family. As to quaternary structure, PSII is composed of 1 copy each of membrane proteins PsbA, PsbB, PsbC, PsbD, PsbE, PsbF, PsbH, PsbI, PsbJ, PsbK, PsbL, PsbM, PsbT, PsbX, PsbY, PsbZ, Psb30/Ycf12, at least 3 peripheral proteins of the oxygen-evolving complex and a large number of cofactors. It forms dimeric complexes.

The protein resides in the plastid. It is found in the chloroplast thylakoid membrane. In terms of biological role, one of the components of the core complex of photosystem II (PSII). PSII is a light-driven water:plastoquinone oxidoreductase that uses light energy to abstract electrons from H(2)O, generating O(2) and a proton gradient subsequently used for ATP formation. It consists of a core antenna complex that captures photons, and an electron transfer chain that converts photonic excitation into a charge separation. This chain is Photosystem II reaction center protein J, found in Trieres chinensis (Marine centric diatom).